The chain runs to 248 residues: Mannose-binding protein C (248 aa).

Positions 1–20 are cleaved as a signal peptide; the sequence is MSLFPSLTLLLLSVVATSYS. The region spanning 42 to 99 is the Collagen-like domain; it reads GINGFPGKDGRDGTKGEKGEPGQGLRGLQGPPGKLGPPGNPGSSGSPGPKGQKGDPGE. A disordered region spans residues 43-111; that stretch reads INGFPGKDGR…DCESSLAASE (69 aa). Position 47 is a 4-hydroxyproline (P47). Basic and acidic residues predominate over residues 49–61; the sequence is KDGRDGTKGEKGE. 4-hydroxyproline is present on residues P73, P79, P82, and P88. The segment covering 82 to 91 has biased composition (low complexity); the sequence is PGSSGSPGPK. Positions 112-130 form a coiled coil; the sequence is RKALQTEMARIKKWLTFSL. The 112-residue stretch at 134-245 folds into the C-type lectin domain; that stretch reads VGNKFFLTNG…CSSSHLALCE (112 aa). 2 cysteine pairs are disulfide-bonded: C155-C244 and C222-C236.

In terms of assembly, oligomeric complex of 3 or more homotrimers. Interacts with MASP1 and MASP2. Interacts with MEP1A and MEP1B and may inhibit their catalytic activity. Hydroxylation on proline residues within the sequence motif, GXPG, is most likely to be 4-hydroxy as this fits the requirement for 4-hydroxylation in vertebrates.

The protein localises to the secreted. Calcium-dependent lectin involved in innate immune defense. Binds mannose, fucose and N-acetylglucosamine on different microorganisms and activates the lectin complement pathway. Binds to late apoptotic cells, as well as to apoptotic blebs and to necrotic cells, but not to early apoptotic cells, facilitating their uptake by macrophages. This is Mannose-binding protein C (MBL2) from Macaca fascicularis (Crab-eating macaque).